Here is a 630-residue protein sequence, read N- to C-terminus: Multidrug transporter TPO3 (630 aa).

Residues 1-35 (MVDQESLVSFSSETSQSINSDIDIESQQQPRQYIP) are compositionally biased toward polar residues. Disordered regions lie at residues 1–46 (MVDQ…KERL) and 107–157 (TSTA…NQQP). The span at 37 to 46 (NEKDGNKERL) shows a compositional bias: basic and acidic residues. The span at 125-137 (RRSQNIAASSNSS) shows a compositional bias: low complexity. N-linked (GlcNAc...) asparagine glycosylation occurs at Asn135. 12 helical membrane-spanning segments follow: residues 190-210 (ILSC…GGLF), 222-242 (AAIL…LIWS), 252-272 (LAYF…ALSP), 282-302 (FLCG…IADM), 312-332 (IAFF…VNGF), 342-362 (LIFW…AFIP), 423-443 (FYVC…PVVF), 453-473 (LIGL…ATTF), 494-514 (LFGA…LGAT), 519-539 (IIWV…VLIY), 553-575 (YASS…FPLF), and 587-607 (WASW…FGFY).

Belongs to the major facilitator superfamily. DHA1 family. Polyamines/proton antiporter (TC 2.A.1.2.16) subfamily.

Its subcellular location is the cell membrane. Its function is as follows. Cell membrane polyamine/proton antiporter, involved in the detoxification of excess polyamines in the cytoplasm. Involved in the resistance to the imidazole antifungal drugs tioconazole, miconazole, clotrimazole and ketoconazole; to the triazole fluconazole; but not to the antifungals flucytosine or amphotericin B. Plays a role in spermine homeostasis, but spermine accumulation in response to clotrimazole is independent of TPO3. The polypeptide is Multidrug transporter TPO3 (Candida glabrata (strain ATCC 2001 / BCRC 20586 / JCM 3761 / NBRC 0622 / NRRL Y-65 / CBS 138) (Yeast)).